Reading from the N-terminus, the 398-residue chain is Probable aminomethyltransferase (398 aa).

This sequence belongs to the GcvT family. The glycine cleavage system is composed of four proteins: P, T, L and H.

It catalyses the reaction N(6)-[(R)-S(8)-aminomethyldihydrolipoyl]-L-lysyl-[protein] + (6S)-5,6,7,8-tetrahydrofolate = N(6)-[(R)-dihydrolipoyl]-L-lysyl-[protein] + (6R)-5,10-methylene-5,6,7,8-tetrahydrofolate + NH4(+). Functionally, the glycine cleavage system catalyzes the degradation of glycine. The protein is Probable aminomethyltransferase of Pyrococcus furiosus (strain ATCC 43587 / DSM 3638 / JCM 8422 / Vc1).